The primary structure comprises 103 residues: Small ribosomal subunit protein uS10 (103 aa).

This sequence belongs to the universal ribosomal protein uS10 family. In terms of assembly, part of the 30S ribosomal subunit.

Its function is as follows. Involved in the binding of tRNA to the ribosomes. The polypeptide is Small ribosomal subunit protein uS10 (Azotobacter vinelandii (strain DJ / ATCC BAA-1303)).